The following is a 146-amino-acid chain: UPF0178 protein BCE33L2782 (146 aa).

This sequence belongs to the UPF0178 family.

This chain is UPF0178 protein BCE33L2782, found in Bacillus cereus (strain ZK / E33L).